A 101-amino-acid polypeptide reads, in one-letter code: Small ribosomal subunit protein bS18c (101 aa).

Belongs to the bacterial ribosomal protein bS18 family. Part of the 30S ribosomal subunit.

It localises to the plastid. It is found in the chloroplast. In Arabidopsis thaliana (Mouse-ear cress), this protein is Small ribosomal subunit protein bS18c (rps18).